The primary structure comprises 215 residues: Protein N-lysine methyltransferase METTL21A (215 aa).

Residues Trp-47, 73 to 75 (GAG), Asp-94, Trp-125, and Ala-141 contribute to the S-adenosyl-L-methionine site.

The protein belongs to the methyltransferase superfamily. METTL21 family.

The protein resides in the cytoplasm. It carries out the reaction L-lysyl-[protein] + 3 S-adenosyl-L-methionine = N(6),N(6),N(6)-trimethyl-L-lysyl-[protein] + 3 S-adenosyl-L-homocysteine + 3 H(+). Its function is as follows. Protein-lysine methyltransferase that selectively trimethylates residues in heat shock protein 70 (HSP70) family members. This is Protein N-lysine methyltransferase METTL21A (mettl21a) from Xenopus tropicalis (Western clawed frog).